Consider the following 396-residue polypeptide: Elongation factor Tu (396 aa).

In terms of domain architecture, tr-type G spans 10-207; the sequence is KPHCNIGTIG…VDAYIPQPPR (198 aa). The interval 19–26 is G1; it reads GHVDHGKT. Residue 19 to 26 coordinates GTP; sequence GHVDHGKT. Thr-26 provides a ligand contact to Mg(2+). The G2 stretch occupies residues 60 to 64; the sequence is GITIS. A G3 region spans residues 81–84; that stretch reads DCPG. Residues 81 to 85 and 136 to 139 contribute to the GTP site; these read DCPGH and NKVD. Residues 136-139 are G4; it reads NKVD. Residues 174–176 form a G5 region; the sequence is SAL.

The protein belongs to the TRAFAC class translation factor GTPase superfamily. Classic translation factor GTPase family. EF-Tu/EF-1A subfamily. Monomer.

The protein localises to the cytoplasm. It catalyses the reaction GTP + H2O = GDP + phosphate + H(+). GTP hydrolase that promotes the GTP-dependent binding of aminoacyl-tRNA to the A-site of ribosomes during protein biosynthesis. The sequence is that of Elongation factor Tu from Novosphingobium aromaticivorans (strain ATCC 700278 / DSM 12444 / CCUG 56034 / CIP 105152 / NBRC 16084 / F199).